Consider the following 347-residue polypeptide: Hyaluronidase conohyal-ad1 (347 aa).

A signal peptide spans 1-18 (MRAVVVVTGLVVVVVTTT). A propeptide spanning residues 19–33 (LSLQDHDVKSASSPL) is cleaved from the precursor. Residues 27 to 49 (KSASSPLSSSVDQGSSGDDCDEG) are disordered. A compositionally biased stretch (low complexity) spans 28–43 (SASSPLSSSVDQGSSG). A disulfide bridge links cysteine 67 with cysteine 343. Glutamate 150 serves as the catalytic Proton donor.

Belongs to the glycosyl hydrolase 56 family. Post-translationally, contains 4 disulfide bonds. In terms of processing, is N-linked glycosylated at three positions. As to expression, expressed by the venom duct.

The protein resides in the secreted. It catalyses the reaction Random hydrolysis of (1-&gt;4)-linkages between N-acetyl-beta-D-glucosamine and D-glucuronate residues in hyaluronate.. Its function is as follows. Hyaluronidase catalyzes the hydrolysis of hyaluronic acid (HA), an anionic, nonsulfated glycosaminoglycan distributed widely throughout connective, epithelial, and neural tissues. In venom, they are known to enhance diffusion of the venom by degrading the extracellular matrix. The chain is Hyaluronidase conohyal-ad1 from Conus adamsonii (Rhododendron cone).